Reading from the N-terminus, the 346-residue chain is NADH-quinone oxidoreductase subunit H (346 aa).

The next 9 membrane-spanning stretches (helical) occupy residues 13–33 (ILLILLQCLLLVVPLLVALAF), 51–71 (PNVVGAFGLLQSFADFLKYIV), 83–103 (AVYFLAPIVSLVMALIAWAVI), 116–136 (VAVLYVFAVSSLEVYGVIMGG), 162–182 (IGLIIIGVIISTGSMNFTAIV), 191–211 (LLNWYFLPHFPMLFLFFISAL), 244–264 (FMIGELVAVVLMCALTVLLFF), 278–298 (VFWMILKMLAVFFMFSMVKAI), and 310–330 (LGWKVFLPFSLFWVVFVAFMA).

This sequence belongs to the complex I subunit 1 family. As to quaternary structure, NDH-1 is composed of 14 different subunits. Subunits NuoA, H, J, K, L, M, N constitute the membrane sector of the complex.

The protein localises to the cell inner membrane. The catalysed reaction is a quinone + NADH + 5 H(+)(in) = a quinol + NAD(+) + 4 H(+)(out). Its function is as follows. NDH-1 shuttles electrons from NADH, via FMN and iron-sulfur (Fe-S) centers, to quinones in the respiratory chain. The immediate electron acceptor for the enzyme in this species is believed to be ubiquinone. Couples the redox reaction to proton translocation (for every two electrons transferred, four hydrogen ions are translocated across the cytoplasmic membrane), and thus conserves the redox energy in a proton gradient. This subunit may bind ubiquinone. The protein is NADH-quinone oxidoreductase subunit H of Jannaschia sp. (strain CCS1).